A 309-amino-acid polypeptide reads, in one-letter code: Cytidine deaminase (309 aa).

CMP/dCMP-type deaminase domains are found at residues 48-168 (DEDA…FGPR) and 200-309 (DDND…SLSL). 89–91 (NME) is a binding site for substrate. A Zn(2+)-binding site is contributed by H102. E104 functions as the Proton donor in the catalytic mechanism. Residues C129 and C132 each coordinate Zn(2+).

It belongs to the cytidine and deoxycytidylate deaminase family. In terms of assembly, homodimer. Zn(2+) serves as cofactor.

The enzyme catalyses cytidine + H2O + H(+) = uridine + NH4(+). The catalysed reaction is 2'-deoxycytidine + H2O + H(+) = 2'-deoxyuridine + NH4(+). In terms of biological role, this enzyme scavenges exogenous and endogenous cytidine and 2'-deoxycytidine for UMP synthesis. The chain is Cytidine deaminase from Sodalis glossinidius (strain morsitans).